We begin with the raw amino-acid sequence, 445 residues long: D-serine transporter DsdX (445 aa).

At 1 to 4 the chain is on the cytoplasmic side; it reads MHSQ. Residues 5–25 form a helical membrane-spanning segment; it reads IWVVSTLLISIVLIVLTIVKF. The Periplasmic portion of the chain corresponds to 26–28; sequence KFH. A helical membrane pass occupies residues 29–49; it reads PFLALLLASFFVGTMMGMGPL. At 50-56 the chain is on the cytoplasmic side; the sequence is DMVNAIE. Residues 57–77 traverse the membrane as a helical segment; it reads SGIGGTLGFLAAVIGLGTILG. The Periplasmic segment spans residues 78–105; sequence KMMEVSGAAERIGLTLQRCRWLSVDVIM. A helical membrane pass occupies residues 106–126; the sequence is VLVGLICGITLFVEVGVVLLI. Residues 127 to 139 are Cytoplasmic-facing; that stretch reads PLAFSIAKKTNTS. A helical membrane pass occupies residues 140 to 160; the sequence is LLKLAIPLCTALMAVHCVVPP. The Periplasmic portion of the chain corresponds to 161-177; the sequence is HPAALYVANKLGADIGS. A helical membrane pass occupies residues 178–198; it reads VIVYGLLVGLMASLIGGPLFL. At 199–223 the chain is on the cytoplasmic side; that stretch reads KFLGQRLPFKPVPTEFADLKVRDEK. The chain crosses the membrane as a helical span at residues 224–244; it reads TLPSLGATLFTILLPIALMLV. At 245–257 the chain is on the periplasmic side; that stretch reads KTIAELNMARESG. A helical transmembrane segment spans residues 258–278; that stretch reads LYILVEFIGNPITAMFIAVFV. The Cytoplasmic portion of the chain corresponds to 279-301; it reads AYYVLGIRQHMSMGTMLTHTENG. A helical transmembrane segment spans residues 302–322; sequence FGSIANILLIIGAGGAFNAIL. The Periplasmic portion of the chain corresponds to 323–342; the sequence is KSSSLADTLAVILSNMHMHP. Transmembrane regions (helical) follow at residues 343–363, 364–384, and 385–405; these read ILLA…ATVA, MMGA…ISPE, and IIAI…DSLF. Residues 406 to 424 lie on the Cytoplasmic side of the membrane; the sequence is WLVKQYCGATLNETFKYYT. A helical transmembrane segment spans residues 425 to 445; that stretch reads TATFIASVVALAGTFLLSFII.

This sequence belongs to the GntP permease family.

It is found in the cell inner membrane. In terms of biological role, a D-serine-specific transporter, may function as a H(+) symporter. This chain is D-serine transporter DsdX, found in Escherichia coli (strain K12).